A 342-amino-acid polypeptide reads, in one-letter code: P2Y purinoceptor 12 (342 aa).

The Extracellular segment spans residues 1 to 27 (MQAIDNLTSAPGNTSLCTRDYKITQVL). N-linked (GlcNAc...) asparagine glycans are attached at residues Asn-6 and Asn-13. Intrachain disulfides connect Cys-17–Cys-270 and Cys-97–Cys-175. Residues 28–50 (FPLLYTVLFFVGLITNSLAMRIF) form a helical membrane-spanning segment. The Cytoplasmic portion of the chain corresponds to 51 to 61 (FQIRSKSNFII). Ser-55 and Ser-57 each carry phosphoserine. The chain crosses the membrane as a helical span at residues 62–82 (FLKNTVISDLLMILTFPFKIL). Topologically, residues 83 to 97 (SDAKLGAGPLRTFVC) are extracellular. ADP-binding residues include Arg-93, Cys-97, and Tyr-105. The helical transmembrane segment at 98 to 118 (QVTSVIFYFTMYISISFLGLI) threads the bilayer. Residues 119 to 142 (TIDRYQKTTRPFKTSNPKNLLGAK) are Cytoplasmic-facing. The helical transmembrane segment at 143 to 162 (ILSVLIWAFMFLLSLPNMIL) threads the bilayer. ADP contacts are provided by residues 156–159 (SLPN), 175–179 (CSFLK), His-187, and Asn-191. The Extracellular segment spans residues 163–185 (TNRRPRDKNVKKCSFLKSEFGLV). Residues 186-207 (WHEIVNYICQVIFWINFLIVIV) form a helical membrane-spanning segment. Over 208-233 (CYTLITKELYRSYVRTRGVGKVPRKK) the chain is Cytoplasmic. Residues 234-259 (VNVKVFIIIAVFFICFVPFHFARIPY) traverse the membrane as a helical segment. ADP-binding positions include 256–259 (RIPY), Gln-263, and Lys-280. At 260–278 (TLSQTRDVFDCAAENTLFY) the chain is on the extracellular side. A helical transmembrane segment spans residues 279–298 (VKESTLWLTSLNACLDPFIY). Topologically, residues 299-342 (FFLCKSFRNSLISMLKCPNSATSQSQDNRKKEQDGGDPNEETPM) are cytoplasmic. The segment at 317–342 (NSATSQSQDNRKKEQDGGDPNEETPM) is disordered. The segment covering 333–342 (GGDPNEETPM) has biased composition (acidic residues).

The protein belongs to the G-protein coupled receptor 1 family.

Its subcellular location is the cell membrane. In terms of biological role, receptor for ADP and ATP coupled to G-proteins that inhibit the adenylyl cyclase second messenger system. Required for normal platelet aggregation and blood coagulation. This chain is P2Y purinoceptor 12 (P2RY12), found in Macaca fascicularis (Crab-eating macaque).